A 105-amino-acid chain; its full sequence is U-scoloptoxin(10)-Sm3a (105 aa).

The first 23 residues, 1–23, serve as a signal peptide directing secretion; it reads MYKFIFIFFTVFFLINIIEESXT.

This sequence belongs to the scoloptoxin-10 family. Contains 3 disulfide bonds. As to expression, expressed by the venom gland.

It is found in the secreted. The chain is U-scoloptoxin(10)-Sm3a from Scolopendra morsitans (Tanzanian blue ringleg centipede).